The sequence spans 135 residues: Probable transporter PD_1892 (135 aa).

The next 4 helical transmembrane spans lie at 4–24, 45–65, 71–91, and 114–134; these read YWYP…LLLL, AQNI…TVIF, VTVA…GLGT, and IVAT…MGVY.

The protein belongs to the TsuA/YedE (TC 9.B.102) family.

The protein resides in the cell inner membrane. In Xylella fastidiosa (strain Temecula1 / ATCC 700964), this protein is Probable transporter PD_1892.